The chain runs to 163 residues: Peptidyl-prolyl cis-trans isomerase (163 aa).

Residues 5–162 (YFDVSSNGKP…SVLKIEDCGT (158 aa)) form the PPIase cyclophilin-type domain.

This sequence belongs to the cyclophilin-type PPIase family. PPIase A subfamily.

The protein localises to the cytoplasm. The enzyme catalyses [protein]-peptidylproline (omega=180) = [protein]-peptidylproline (omega=0). Binds cyclosporin A (CsA). CsA mediates some of its effects via an inhibitory action on PPIase. In terms of biological role, PPIases accelerate the folding of proteins. It catalyzes the cis-trans isomerization of proline imidic peptide bonds in oligopeptides. The sequence is that of Peptidyl-prolyl cis-trans isomerase (PIG28) from Uromyces fabae (Rust fungus).